A 258-amino-acid polypeptide reads, in one-letter code: Acyl-[acyl-carrier-protein]--UDP-N-acetylglucosamine O-acyltransferase (258 aa).

This sequence belongs to the transferase hexapeptide repeat family. LpxA subfamily. Homotrimer.

It localises to the cytoplasm. It catalyses the reaction a (3R)-hydroxyacyl-[ACP] + UDP-N-acetyl-alpha-D-glucosamine = a UDP-3-O-[(3R)-3-hydroxyacyl]-N-acetyl-alpha-D-glucosamine + holo-[ACP]. It participates in glycolipid biosynthesis; lipid IV(A) biosynthesis; lipid IV(A) from (3R)-3-hydroxytetradecanoyl-[acyl-carrier-protein] and UDP-N-acetyl-alpha-D-glucosamine: step 1/6. Its function is as follows. Involved in the biosynthesis of lipid A, a phosphorylated glycolipid that anchors the lipopolysaccharide to the outer membrane of the cell. This chain is Acyl-[acyl-carrier-protein]--UDP-N-acetylglucosamine O-acyltransferase, found in Pseudomonas fluorescens (strain SBW25).